A 269-amino-acid chain; its full sequence is WW domain-binding protein 1 (269 aa).

Short sequence motifs (PPxY motif) lie at residues 124 to 127 (PPAY) and 137 to 141 (PPPPY). 2 disordered regions span residues 169-203 (EGTNVEGVSSHQSAPPHQEGEPGAGVTPASTPPSC) and 249-269 (PPESVPQIFPMGLSSSEGDIP). The segment covering 174–183 (EGVSSHQSAP) has biased composition (polar residues).

In terms of assembly, interacts with NEDD4. Binds to the WW domain of YAP1, WWP1 and WWP2. Interacts with WWOX. Expressed in most tissues but at significantly lower levels in placenta, lung, liver, and kidney.

This Homo sapiens (Human) protein is WW domain-binding protein 1 (WBP1).